We begin with the raw amino-acid sequence, 662 residues long: Fructose-1,6-bisphosphatase class 3 (662 aa).

It belongs to the FBPase class 3 family. It depends on Mn(2+) as a cofactor.

The catalysed reaction is beta-D-fructose 1,6-bisphosphate + H2O = beta-D-fructose 6-phosphate + phosphate. Its pathway is carbohydrate biosynthesis; gluconeogenesis. The protein is Fructose-1,6-bisphosphatase class 3 of Clostridium tetani (strain Massachusetts / E88).